Here is a 353-residue protein sequence, read N- to C-terminus: Holliday junction branch migration complex subunit RuvB (353 aa).

The tract at residues 1–25 is disordered; that stretch reads MDPGPAGDEVSLAPQQETAEQDVET. Residues 1–188 are large ATPase domain (RuvB-L); sequence MDPGPAGDEV…FGFTAHMEFY (188 aa). ATP contacts are provided by residues Leu-27, Arg-28, Gly-69, Lys-72, Thr-73, Ser-74, 135-137, Arg-178, Tyr-188, and Arg-225; that span reads EDY. Residue Thr-73 coordinates Mg(2+). The interval 189–259 is small ATPAse domain (RuvB-S); sequence EPAELELVVR…VARAALEVYD (71 aa). The tract at residues 262 to 353 is head domain (RuvB-H); the sequence is EHGLDRLDRA…ATRSLFADEV (92 aa). The DNA site is built by Arg-317 and Arg-322.

The protein belongs to the RuvB family. Homohexamer. Forms an RuvA(8)-RuvB(12)-Holliday junction (HJ) complex. HJ DNA is sandwiched between 2 RuvA tetramers; dsDNA enters through RuvA and exits via RuvB. An RuvB hexamer assembles on each DNA strand where it exits the tetramer. Each RuvB hexamer is contacted by two RuvA subunits (via domain III) on 2 adjacent RuvB subunits; this complex drives branch migration. In the full resolvosome a probable DNA-RuvA(4)-RuvB(12)-RuvC(2) complex forms which resolves the HJ.

The protein resides in the cytoplasm. The enzyme catalyses ATP + H2O = ADP + phosphate + H(+). In terms of biological role, the RuvA-RuvB-RuvC complex processes Holliday junction (HJ) DNA during genetic recombination and DNA repair, while the RuvA-RuvB complex plays an important role in the rescue of blocked DNA replication forks via replication fork reversal (RFR). RuvA specifically binds to HJ cruciform DNA, conferring on it an open structure. The RuvB hexamer acts as an ATP-dependent pump, pulling dsDNA into and through the RuvAB complex. RuvB forms 2 homohexamers on either side of HJ DNA bound by 1 or 2 RuvA tetramers; 4 subunits per hexamer contact DNA at a time. Coordinated motions by a converter formed by DNA-disengaged RuvB subunits stimulates ATP hydrolysis and nucleotide exchange. Immobilization of the converter enables RuvB to convert the ATP-contained energy into a lever motion, pulling 2 nucleotides of DNA out of the RuvA tetramer per ATP hydrolyzed, thus driving DNA branch migration. The RuvB motors rotate together with the DNA substrate, which together with the progressing nucleotide cycle form the mechanistic basis for DNA recombination by continuous HJ branch migration. Branch migration allows RuvC to scan DNA until it finds its consensus sequence, where it cleaves and resolves cruciform DNA. This Saccharopolyspora erythraea (strain ATCC 11635 / DSM 40517 / JCM 4748 / NBRC 13426 / NCIMB 8594 / NRRL 2338) protein is Holliday junction branch migration complex subunit RuvB.